Consider the following 62-residue polypeptide: U8-theraphotoxin-Cg1a 2 (62 aa).

A signal peptide spans 1–21 (MKTLVLFIIFGLAALFLLSSA). The propeptide occupies 22–29 (TELEETER). 3 cysteine pairs are disulfide-bonded: C31-C46, C38-C51, and C45-C58.

This sequence belongs to the neurotoxin 10 (Hwtx-1) family. 30 (Jztx-14) subfamily. As to expression, expressed by the venom gland.

Its subcellular location is the secreted. In terms of biological role, probable ion channel inhibitor. The polypeptide is U8-theraphotoxin-Cg1a 2 (Chilobrachys guangxiensis (Chinese earth tiger tarantula)).